The sequence spans 527 residues: MSYPLEEVNKRRTFAIISHPDAGKTTITEKVLLYGNAIQTAGSVKGKGSAAHAKSDWMEMEKQRGISITTSVMQFPYNNCLVNLLDTPGHEDFSEDTYRTLTAVDSCLMVIDSAKGVEERTIKLMEVTRLRDTPIITFMNKLDRDIRDPMELLDEVENVLKIRCAPITWPIGCGKLFKGVYHLAKNETYLYQSGQGSTIQAVRVVKGLNNPELDVAVGDDLAQQLRDELELVQGASNEFEQDAFIKGELTPVFFGTALGNFGVDHFLDGLTQWAPKPQSRQADTRTVESAEEKFSGFVFKIQANMDPKHRDRVAFMRVVSGKYEKGMKLKHVRIGKDVVISDALTFMAGDRAHAEEAYAGDIIGLHNHGTIQIGDTFTQGETLKFTGIPNFAPELFRRIRLKDPLKQKQLLKGLVQLSEEGAVQVFRPLLNNDLIVGAVGVLQFDVVVLRLKTEYNVEAIYENVNVATARWVECADGKKFEEFKRKNEQNLALDGGDNLTYIAPTMVNLNLAQERYPDVVFYKTREH.

A tr-type G domain is found at 9–278; it reads NKRRTFAIIS…GLTQWAPKPQ (270 aa). Residues 18–25, 86–90, and 140–143 contribute to the GTP site; these read SHPDAGKT, DTPGH, and NKLD.

It belongs to the TRAFAC class translation factor GTPase superfamily. Classic translation factor GTPase family. PrfC subfamily.

Its subcellular location is the cytoplasm. Functionally, increases the formation of ribosomal termination complexes and stimulates activities of RF-1 and RF-2. It binds guanine nucleotides and has strong preference for UGA stop codons. It may interact directly with the ribosome. The stimulation of RF-1 and RF-2 is significantly reduced by GTP and GDP, but not by GMP. This chain is Peptide chain release factor 3, found in Haemophilus influenzae (strain PittEE).